We begin with the raw amino-acid sequence, 801 residues long: Phenylalanine--tRNA ligase beta subunit (801 aa).

One can recognise a tRNA-binding domain in the interval 39–153 (AEGLSKLVVG…EGAIPGDSIF (115 aa)). Residues 406–481 (TEPVEVSTTL…RIYGYEKLPT (76 aa)) form the B5 domain. Mg(2+)-binding residues include Asp459, Asp465, Glu468, and Glu469. Residues 708–801 (TKYPSVSRDI…LVEKVNAEIR (94 aa)) enclose the FDX-ACB domain.

This sequence belongs to the phenylalanyl-tRNA synthetase beta subunit family. Type 1 subfamily. Tetramer of two alpha and two beta subunits. The cofactor is Mg(2+).

It localises to the cytoplasm. It carries out the reaction tRNA(Phe) + L-phenylalanine + ATP = L-phenylalanyl-tRNA(Phe) + AMP + diphosphate + H(+). The sequence is that of Phenylalanine--tRNA ligase beta subunit from Streptococcus agalactiae serotype Ia (strain ATCC 27591 / A909 / CDC SS700).